The chain runs to 1004 residues: Cadmium/zinc-transporting ATPase HMA3 (1004 aa).

In terms of domain architecture, HMA spans 42-108 (KKTYLDVLGV…ALNKAGLEAS (67 aa)). The next 8 membrane-spanning stretches (helical) occupy residues 120 to 140 (RWPS…FFEW), 144 to 164 (PLQC…VRRG), 171 to 191 (LSLD…CLGD), 193 to 213 (TEAG…TLAC), 340 to 360 (CAKY…LIPA), 371 to 391 (WKLA…LSTP), 683 to 703 (IAVN…LAAA), and 707 to 727 (VLWA…LNSM). Residues 931-952 (TGCGASKRSPPAEGSCSGGEGG) are disordered.

The protein belongs to the cation transport ATPase (P-type) (TC 3.A.3) family. Type IB subfamily. Specifically expressed in roots.

The protein localises to the vacuole membrane. The catalysed reaction is Zn(2+)(in) + ATP + H2O = Zn(2+)(out) + ADP + phosphate + H(+). It carries out the reaction Cd(2+)(in) + ATP + H2O = Cd(2+)(out) + ADP + phosphate + H(+). Functionally, root-specific cadmium (Cd) transporter that mediates Cd efflux in root vacuoles. Involved in Cd detoxification by sequestrating Cd into root vacuoles and limiting translocation of Cd from the roots to the shoots, and accumulation in grains. The sequence is that of Cadmium/zinc-transporting ATPase HMA3 from Oryza sativa subsp. japonica (Rice).